The sequence spans 136 residues: MARTKQTARKSTGGKAPRKQLATKAARKSAPATGGVKKPHRFRPGTVALREIRRYQKSTELLIRKLPFQRLVREIAQDFKTDLRFQSSAVAALQEAAEAYLVGLFEDTNLCAIHAKRVTIMPKDIQLARRIRGERA.

The segment at 1-43 (MARTKQTARKSTGGKAPRKQLATKAARKSAPATGGVKKPHRFR) is disordered. Lys-5 is subject to N6-methylated lysine. Lys-10 is modified (N6-acetyllysine; alternate). N6-methylated lysine; alternate is present on Lys-10. At Ser-11 the chain carries Phosphoserine. The residue at position 12 (Thr-12) is a Phosphothreonine. Lys-15 carries the post-translational modification N6-acetyllysine. N6-acetyllysine; alternate occurs at positions 19 and 24. Lys-19 and Lys-24 each carry N6-methylated lysine; alternate. Lys-28 carries the N6-methylated lysine modification. Ser-29 is subject to Phosphoserine. Position 37 is an N6-methylated lysine (Lys-37).

This sequence belongs to the histone H3 family. As to quaternary structure, the nucleosome is a histone octamer containing two molecules each of H2A, H2B, H3 and H4 assembled in one H3-H4 heterotetramer and two H2A-H2B heterodimers. The octamer wraps approximately 147 bp of DNA. Post-translationally, acetylation is generally linked to gene activation. Can be acetylated to form H3K9ac, H3K14ac, H3K18ac and H3K23ac. H3K9ac could compete with H3K9me and prevent gene silencing. H3K9ac is restricted to euchromatin. Methylated to form mainly H3K4me, H3K9me, H3K18me, H3K23me, H3K27me and H3K36me. H3K4me1/2/3, H3K9me3, H3K27me3 and H3K36me1/2/3 are typical marks for euchromatin, whereas heterochromatic chromocenters are enriched in H3K9me1/2 and H3K27me1/2. H2BK143ub1 is probably prerequisite for H3K4me. In terms of processing, can be phosphorylated to form H3S10ph, H3T11ph and H3S28ph.

The protein localises to the nucleus. It localises to the chromosome. In terms of biological role, core component of nucleosome. Nucleosomes wrap and compact DNA into chromatin, limiting DNA accessibility to the cellular machineries which require DNA as a template. Histones thereby play a central role in transcription regulation, DNA repair, DNA replication and chromosomal stability. DNA accessibility is regulated via a complex set of post-translational modifications of histones, also called histone code, and nucleosome remodeling. The sequence is that of Histone H3.2 from Encephalartos altensteinii (Altenstein's bread tree).